A 394-amino-acid polypeptide reads, in one-letter code: Alanine racemase 2 (394 aa).

Lysine 39 serves as the catalytic Proton acceptor; specific for D-alanine. Residue lysine 39 is modified to N6-(pyridoxal phosphate)lysine. Arginine 139 lines the substrate pocket. The Proton acceptor; specific for L-alanine role is filled by tyrosine 272. Methionine 320 serves as a coordination point for substrate.

The protein belongs to the alanine racemase family. Requires pyridoxal 5'-phosphate as cofactor.

The catalysed reaction is L-alanine = D-alanine. Its pathway is amino-acid biosynthesis; D-alanine biosynthesis; D-alanine from L-alanine: step 1/1. Functionally, catalyzes the interconversion of L-alanine and D-alanine. May also act on other amino acids. In Bacillus subtilis (strain 168), this protein is Alanine racemase 2 (alr2).